Consider the following 392-residue polypeptide: Galactokinase (392 aa).

Residue 33 to 36 (EHTD) coordinates substrate. ATP contacts are provided by residues S67 and 129–135 (GSGLSSS). 2 residues coordinate Mg(2+): S135 and E167. The active-site Proton acceptor is the D179. Y229 provides a ligand contact to substrate.

It belongs to the GHMP kinase family. GalK subfamily.

The protein resides in the cytoplasm. It carries out the reaction alpha-D-galactose + ATP = alpha-D-galactose 1-phosphate + ADP + H(+). The protein operates within carbohydrate metabolism; galactose metabolism. Functionally, catalyzes the transfer of the gamma-phosphate of ATP to D-galactose to form alpha-D-galactose-1-phosphate (Gal-1-P). The sequence is that of Galactokinase from Limosilactobacillus reuteri (strain DSM 20016) (Lactobacillus reuteri).